The following is a 335-amino-acid chain: Probable G-protein coupled receptor 174 (335 aa).

Residues 1–27 (MTDNFTCNKTDGDNTDFRYFIYAVTYT) are Extracellular-facing. N-linked (GlcNAc...) asparagine glycosylation is found at Asn4 and Asn8. Residues 28–48 (VILVPGLIGNILALWVFYGYM) traverse the membrane as a helical segment. Residues 49–53 (KETKR) lie on the Cytoplasmic side of the membrane. Residues 54–74 (AVVFMINLAIADLLQILSLPL) traverse the membrane as a helical segment. At 75 to 91 (RIFYYLNHDWPFGPGLC) the chain is on the extracellular side. Cysteines 91 and 168 form a disulfide. The helical transmembrane segment at 92-112 (MFCFYLKYVNMYASIYFLVCI) threads the bilayer. Residues 113-134 (SVRRFWFLMYPFRFNDCKQKYD) lie on the Cytoplasmic side of the membrane. Residues 135-155 (LYISIIGWLIICLACLLFPLL) traverse the membrane as a helical segment. Residues 156 to 182 (RTNDDTPGNRTKCFVDLPIRNVNLAQS) lie on the Extracellular side of the membrane. An N-linked (GlcNAc...) asparagine glycan is attached at Asn164. Residues 183–203 (VAMITIGEVVGFVTPLMIVLY) traverse the membrane as a helical segment. Topologically, residues 204–231 (CTWKTALSLQNKYPISQHLGEKKKALKM) are cytoplasmic. A helical membrane pass occupies residues 232–252 (ILTCAGVFLVCFVPYHFSFPL). At 253–268 (DFLVKSNEIKSCFARR) the chain is on the extracellular side. The chain crosses the membrane as a helical span at residues 269-289 (VILIFHSVALCLASLNSCLDP). Residues 290–335 (VIYYFTTNEFRRRLSRQDLPDNIQLHTKSYKIASNHATSTVAAELC) lie on the Cytoplasmic side of the membrane.

The protein belongs to the G-protein coupled receptor 1 family. As to quaternary structure, interacts with GNA13. Interacts with CCL21. In terms of tissue distribution, expressed in spleen and, at low levels, in brain. Highly expressed in developing and mature regulatory T-cells.

The protein localises to the cell membrane. In terms of biological role, G-protein-coupled receptor of lysophosphatidylserine (LysoPS) that plays different roles in immune response. Plays a negative role in regulatory T-cell accumulation and homeostasis. Under inflammatory conditions where LysoPS production increases, contributes to the down-regulation of regulatory T-cell activity to favor effector response. Mediates the suppression of IL-2 production in activated T-lymphocytes leading to inhibition of growth, proliferation and differentiation of T-cells. Mechanistically, acts via G(s)-containing heterotrimeric G proteins to trigger elevated cyclic AMP levels and protein kinase A/PKA activity, which may in turn act to antagonize proximal TCR signaling. Plays an important role in the initial period of sepsis through the regulation of macrophage polarization and pro- and anti-inflammatory cytokine secretions. Upon testosterone treatment, acts as a receptor for CCL21 and subsequently triggers through G(q)-alpha and G(12)/G(13) proteins a calcium flux leading to chemotactic effects on activated B-cells. Signals via GNA13 and PKA to promote CD86 up-regulation by follicular B-cells. The chain is Probable G-protein coupled receptor 174 (Gpr174) from Mus musculus (Mouse).